The sequence spans 578 residues: Multidrug resistance-like ATP-binding protein MdlB (578 aa).

In terms of domain architecture, ABC transmembrane type-1 spans 25–308 (LILGFTLLLF…ITSQQSIFQQ (284 aa)). A run of 6 helical transmembrane segments spans residues 26-46 (ILGF…PILI), 59-79 (VNYS…AAIL), 143-163 (SLFQ…ILEW), 166-186 (ACIA…YQYF), 196-216 (VYIA…DVIQ), and 260-280 (LILC…FEIG). In terms of domain architecture, ABC transporter spans 339–573 (IKVKNLYFSY…KSYYKNMYYS (235 aa)). 373-380 (GRTGSGKS) contributes to the ATP binding site.

It belongs to the ABC transporter superfamily. Drug exporter-2 (TC 3.A.1.117) family.

It localises to the cell membrane. It catalyses the reaction ATP + H2O + xenobioticSide 1 = ADP + phosphate + xenobioticSide 2.. This Buchnera aphidicola subsp. Baizongia pistaciae (strain Bp) protein is Multidrug resistance-like ATP-binding protein MdlB (mdlB).